The chain runs to 359 residues: Probable L-ascorbate peroxidase 7, chloroplastic (359 aa).

The N-terminal 71 residues, 1–71 (MAAQRLAALH…KAAGSGRSVM (71 aa)), are a transit peptide targeting the chloroplast. The Proton acceptor role is filled by H118. H247 contributes to the heme b binding site. K(+) is bound at residue T248. The segment at 251–277 (RSRPERSGWGKPETKYTKNGPGAPGGQ) is disordered. Residues 252–266 (SRPERSGWGKPETKY) are compositionally biased toward basic and acidic residues. The K(+) site is built by T280 and D287.

The protein belongs to the peroxidase family. Ascorbate peroxidase subfamily. Heme b serves as cofactor. As to expression, expressed in roots, leaves, stems and flowers.

Its subcellular location is the plastid. It is found in the chloroplast stroma. It catalyses the reaction L-ascorbate + H2O2 = L-dehydroascorbate + 2 H2O. Its function is as follows. Plays a key role in hydrogen peroxide removal. This chain is Probable L-ascorbate peroxidase 7, chloroplastic, found in Oryza sativa subsp. japonica (Rice).